Consider the following 243-residue polypeptide: Probable transcriptional regulatory protein BAV2207 (243 aa).

Residues 1 to 21 (MAGHSKWANIQHRKGRQDAKR) are disordered.

Belongs to the TACO1 family.

The protein resides in the cytoplasm. The sequence is that of Probable transcriptional regulatory protein BAV2207 from Bordetella avium (strain 197N).